The chain runs to 441 residues: Lysine histidine transporter-like 2 (441 aa).

The Cytoplasmic portion of the chain corresponds to 1–32; sequence MEKSQSSPTKDASTKQKNVDDWLPITSSRNAK. A helical membrane pass occupies residues 33–53; it reads WWYSAFHNVTAMVGAGVLSLP. Topologically, residues 54 to 58 are extracellular; the sequence is YAMSN. The helical transmembrane segment at 59-79 threads the bilayer; that stretch reads LGWGPGVTIMIMSWLITFYTL. Residues 80–110 lie on the Cytoplasmic side of the membrane; sequence WQMVQMHEMVPGKRFDRYHELGQHAFGEKLG. The helical transmembrane segment at 111–131 threads the bilayer; sequence LWIVVPQQLIVEVGVDIVYMV. At 132–155 the chain is on the extracellular side; sequence TGGKSLKKIHDLLCTDCKNIRTTY. The next 2 membrane-spanning stretches (helical) occupy residues 156–176 and 177–197; these read WIMI…FNSI and SIVS…AWAT. Residues 198 to 222 lie on the Extracellular side of the membrane; sequence SVKKGVHPNVDYSSRASTTSGNVFN. The helical transmembrane segment at 223–243 threads the bilayer; sequence FLNALGDVAFAYAGHNVVLEI. The Cytoplasmic portion of the chain corresponds to 244–264; that stretch reads QATIPSTPEKPSKIAMWKGVV. A helical membrane pass occupies residues 265–285; that stretch reads VAYIVVAICYFPVAFVCYYIF. Residues 286–300 are Extracellular-facing; the sequence is GNSVDDNILMTLEKP. The helical transmembrane segment at 301–321 threads the bilayer; it reads IWLIAIANAFVVVHVIGSYQI. Topologically, residues 322 to 347 are cytoplasmic; it reads YAMPVFDMLETFLVKKMMFAPSFKLR. The helical transmembrane segment at 348–370 threads the bilayer; it reads FITRTLYVAFTMFVAICIPFFGG. The Extracellular segment spans residues 371–373; sequence LLG. The chain crosses the membrane as a helical span at residues 374-396; sequence FFGGFAFAPTTYYLPCIMWLCIK. Over 397 to 406 the chain is Cytoplasmic; sequence KPKKYGLSWC. A helical membrane pass occupies residues 407-427; it reads INWFCIVVGVILTILAPIGGL. The Extracellular portion of the chain corresponds to 428 to 441; it reads RTIIISAKNYEFFS.

This sequence belongs to the amino acid/polyamine transporter 2 family. Amino acid/auxin permease (AAAP) (TC 2.A.18.2) subfamily.

Its subcellular location is the cell membrane. Amino acid transporter. The sequence is that of Lysine histidine transporter-like 2 from Arabidopsis thaliana (Mouse-ear cress).